Reading from the N-terminus, the 542-residue chain is MARYIFITGGVVSSLGKGLASAALGALLQARGYTVRLRKLDPYLNIDPGTMSPYQHGEVFVTDDGAETDLDLGHYERFTGRPALRDDNITTGRIYQEIIAKERRGDYLGATVQVIPHVTNAIKDFVLSGTDGVDFVLVEIGGTVGDIEGLPFFEAIRQLGNDLPRSHAIYIHLTLLPFIPSAGELKTKPTQHSVKELRSIGIQPHILLCRTDRTIPREERRKLGLFCNVRESAVIEARDVQSIYDVPRAYHAAGLDQEVLAAFGIEPAPKPDMSRWNAVMERVHNPEGEVTIAIVGKYTGLKDAYKSLIEALAHGGMANRINVRIDWIESEVFESDDPAVYLDHVHGILVPGGFGQRGAEGKILAARFARERKVPYFGICFGMQMAVIEAARSLAGVKDANSTEFGPTKEPVVGLMTEWMRGNELQIRAAESDLGGTMRLGAYRASLAPHSKIAAIYGATEISERHRHRYEVNTAYRERLAENGVIFAGLSPDGLLPETIELLDHPWFIGVQFHPELKSRPFEPHPLFASFIAAALEQSRLV.

Positions 1–265 (MARYIFITGG…DQEVLAAFGI (265 aa)) are amidoligase domain. S13 serves as a coordination point for CTP. S13 contributes to the UTP binding site. 14–19 (SLGKGL) provides a ligand contact to ATP. Y54 is an L-glutamine binding site. Residue D71 participates in ATP binding. D71 and E139 together coordinate Mg(2+). CTP contacts are provided by residues 146-148 (DIE), 186-191 (KTKPTQ), and K222. Residues 186–191 (KTKPTQ) and K222 contribute to the UTP site. Residue 238–240 (RDV) participates in ATP binding. In terms of domain architecture, Glutamine amidotransferase type-1 spans 291–541 (TIAIVGKYTG…IAAALEQSRL (251 aa)). G353 is an L-glutamine binding site. C380 functions as the Nucleophile; for glutamine hydrolysis in the catalytic mechanism. Residues 381–384 (FGMQ), E404, and R469 each bind L-glutamine. Active-site residues include H514 and E516.

This sequence belongs to the CTP synthase family. As to quaternary structure, homotetramer.

It carries out the reaction UTP + L-glutamine + ATP + H2O = CTP + L-glutamate + ADP + phosphate + 2 H(+). The enzyme catalyses L-glutamine + H2O = L-glutamate + NH4(+). The catalysed reaction is UTP + NH4(+) + ATP = CTP + ADP + phosphate + 2 H(+). Its pathway is pyrimidine metabolism; CTP biosynthesis via de novo pathway; CTP from UDP: step 2/2. With respect to regulation, allosterically activated by GTP, when glutamine is the substrate; GTP has no effect on the reaction when ammonia is the substrate. The allosteric effector GTP functions by stabilizing the protein conformation that binds the tetrahedral intermediate(s) formed during glutamine hydrolysis. Inhibited by the product CTP, via allosteric rather than competitive inhibition. Its function is as follows. Catalyzes the ATP-dependent amination of UTP to CTP with either L-glutamine or ammonia as the source of nitrogen. Regulates intracellular CTP levels through interactions with the four ribonucleotide triphosphates. The protein is CTP synthase of Methylocella silvestris (strain DSM 15510 / CIP 108128 / LMG 27833 / NCIMB 13906 / BL2).